The following is a 701-amino-acid chain: Elongation factor G (701 aa).

Positions 8-290 constitute a tr-type G domain; it reads SLYRNIGISA…AVVELLPAPT (283 aa). Residues 17–24, 88–92, and 142–145 each bind GTP; these read AHIDAGKT, DTPGH, and NKMD.

The protein belongs to the TRAFAC class translation factor GTPase superfamily. Classic translation factor GTPase family. EF-G/EF-2 subfamily.

Its subcellular location is the cytoplasm. In terms of biological role, catalyzes the GTP-dependent ribosomal translocation step during translation elongation. During this step, the ribosome changes from the pre-translocational (PRE) to the post-translocational (POST) state as the newly formed A-site-bound peptidyl-tRNA and P-site-bound deacylated tRNA move to the P and E sites, respectively. Catalyzes the coordinated movement of the two tRNA molecules, the mRNA and conformational changes in the ribosome. The protein is Elongation factor G of Neisseria gonorrhoeae (strain ATCC 700825 / FA 1090).